We begin with the raw amino-acid sequence, 261 residues long: Imidazole glycerol phosphate synthase subunit HisF (261 aa).

Residues Asp-16 and Asp-135 contribute to the active site.

The protein belongs to the HisA/HisF family. In terms of assembly, heterodimer of HisH and HisF.

The protein resides in the cytoplasm. The catalysed reaction is 5-[(5-phospho-1-deoxy-D-ribulos-1-ylimino)methylamino]-1-(5-phospho-beta-D-ribosyl)imidazole-4-carboxamide + L-glutamine = D-erythro-1-(imidazol-4-yl)glycerol 3-phosphate + 5-amino-1-(5-phospho-beta-D-ribosyl)imidazole-4-carboxamide + L-glutamate + H(+). The protein operates within amino-acid biosynthesis; L-histidine biosynthesis; L-histidine from 5-phospho-alpha-D-ribose 1-diphosphate: step 5/9. Functionally, IGPS catalyzes the conversion of PRFAR and glutamine to IGP, AICAR and glutamate. The HisF subunit catalyzes the cyclization activity that produces IGP and AICAR from PRFAR using the ammonia provided by the HisH subunit. This chain is Imidazole glycerol phosphate synthase subunit HisF, found in Mycolicibacterium gilvum (strain PYR-GCK) (Mycobacterium gilvum (strain PYR-GCK)).